Reading from the N-terminus, the 755-residue chain is DNA ligase 1 (755 aa).

The transit peptide at M1–F44 directs the protein to the mitochondrion. R2 carries the N-acetylserine modification. The span at S47 to K60 shows a compositional bias: polar residues. 2 disordered regions span residues S47–E79 and P97–V127. A phosphoserine mark is found at S58 and S75. Positions S102–S114 are enriched in low complexity. Phosphoserine occurs at positions 119 and 123. Residues K309–T318 form an interaction with target DNA region. E417 serves as a coordination point for ATP. K419 functions as the N6-AMP-lysine intermediate in the catalytic mechanism. Residues R424 and R440 each contribute to the ATP site. E472 is a Mg(2+) binding site. The interval K493 to K495 is interaction with target DNA. E571 is a binding site for Mg(2+). Residues K576, R590, and K596 each coordinate ATP.

This sequence belongs to the ATP-dependent DNA ligase family. It depends on Mg(2+) as a cofactor.

It is found in the mitochondrion. Its subcellular location is the nucleus. It catalyses the reaction ATP + (deoxyribonucleotide)n-3'-hydroxyl + 5'-phospho-(deoxyribonucleotide)m = (deoxyribonucleotide)n+m + AMP + diphosphate.. Functionally, DNA ligase that seals nicks in double-stranded DNA during DNA replication, DNA recombination and DNA repair. The mitochondrial form is required for mitochondrial DNA maintenance but is non-essential while the nuclear form is essential for cell viability. This chain is DNA ligase 1 (CDC9), found in Saccharomyces cerevisiae (strain ATCC 204508 / S288c) (Baker's yeast).